Here is an 803-residue protein sequence, read N- to C-terminus: Pesticidal crystal protein Cry13Aa (803 aa).

The protein belongs to the delta endotoxin family.

Functionally, endotoxin with nematicidal activity. This Bacillus thuringiensis protein is Pesticidal crystal protein Cry13Aa (cry13Aa).